Here is a 185-residue protein sequence, read N- to C-terminus: Orotate phosphoribosyltransferase (185 aa).

5-phospho-alpha-D-ribose 1-diphosphate-binding positions include Arg-94, Lys-95, Lys-98, His-100, and 120 to 128 (EDVTTTGGS). Thr-124 and Arg-152 together coordinate orotate.

Belongs to the purine/pyrimidine phosphoribosyltransferase family. PyrE subfamily. In terms of assembly, homodimer. The cofactor is Mg(2+).

It carries out the reaction orotidine 5'-phosphate + diphosphate = orotate + 5-phospho-alpha-D-ribose 1-diphosphate. Its pathway is pyrimidine metabolism; UMP biosynthesis via de novo pathway; UMP from orotate: step 1/2. Catalyzes the transfer of a ribosyl phosphate group from 5-phosphoribose 1-diphosphate to orotate, leading to the formation of orotidine monophosphate (OMP). This chain is Orotate phosphoribosyltransferase, found in Thermococcus kodakarensis (strain ATCC BAA-918 / JCM 12380 / KOD1) (Pyrococcus kodakaraensis (strain KOD1)).